The primary structure comprises 360 residues: Variable large protein 18 (360 aa).

Residues 1-26 form the signal peptide; it reads MRKRISAIINKLNISIMMMIVVLMIG. Cysteine 27 carries the N-palmitoyl cysteine lipid modification. Cysteine 27 carries S-diacylglycerol cysteine lipidation.

Belongs to the variable large protein (Vlp) family. Alpha subfamily.

It is found in the cell outer membrane. Its function is as follows. The Vlp and Vsp proteins are antigenically distinct proteins, only one vlp or vsp gene is transcriptionally active at any one time. Switching between these genes is a mechanism of host immune response evasion. This is Variable large protein 18 from Borrelia hermsii.